We begin with the raw amino-acid sequence, 511 residues long: Cytochrome P450 monooxygenase esdpI (511 aa).

The helical transmembrane segment at 14-34 threads the bilayer; it reads VRAGLAIGVAILAIIVLFPGI. C453 lines the heme pocket.

This sequence belongs to the cytochrome P450 family. The cofactor is heme.

It localises to the membrane. The protein operates within secondary metabolite biosynthesis; terpenoid biosynthesis. Functionally, cytochrome P450 monooxygenase; part of the cluster that mediates the biosynthesis of shearones, diterpenoid pyrones (DPs) which are structurally diverse meroterpenoids consisting of a diterpene linked by a pyrone, and which may exhibit a range of bioactivities. Whitin the pathway, esdpI takes part in the molecular scaffold modification via the hydroxylation at C-20 and can transform shearone C into shearone G. The molecular scaffold is commonly biosynthesized by a series of enzymes including the non-reducing polyketide synthase (NR-PKS) esdpA that generates an alpha-pyrone; the prenyltransferase esdpC that attaches a geranylgeranyl pyrophosphate (GGPP) produced by the GGPP synthase (GGPPS) esdpD onto the pyrone unit; the FAD-dependent monooxygenase esdpE that converts an olefin on the diterpene unit into an epoxide; and the terpene cyclase esdpB that catalyzes the cyclization reactions to give the molecular backbone shearone A. In the modification steps, esdpF oxidizes the hydroxy group to a ketone at C-3 and esdpG then attaches hydroxy groups at both C-11 and C-12. After that, esdpI hydroxylates at C-20 and esdpH hydroxylates at C-6'. The ether bridge is generated by nucleophilic attack of the hydroxy group at C-20 to the carbonyl carbon at C-3. EsdpH can also functions prior to esdpI. The different combinations of these modification enzymes lead to the production of diverse shearone derivatives, shearone I being the end product of the pathway. The alpha-ketoglutarate-dependent dioxygenase esdpJ seems not to be involved in this pathway. The sequence is that of Cytochrome P450 monooxygenase esdpI from Penicillium shearii (Eupenicillium shearii).